The following is a 197-amino-acid chain: Recombination protein RecR (197 aa).

The C4-type zinc-finger motif lies at 57 to 72; that stretch reads CSVCFAITEDDPCWIC. The Toprim domain occupies 79 to 174; it reads GTICVVEEPQ…KVTRLAHGIP (96 aa).

It belongs to the RecR family.

Functionally, may play a role in DNA repair. It seems to be involved in an RecBC-independent recombinational process of DNA repair. It may act with RecF and RecO. The protein is Recombination protein RecR of Citrifermentans bemidjiense (strain ATCC BAA-1014 / DSM 16622 / JCM 12645 / Bem) (Geobacter bemidjiensis).